The following is a 91-amino-acid chain: Elongation factor 1-beta (91 aa).

Belongs to the EF-1-beta/EF-1-delta family.

Its function is as follows. Promotes the exchange of GDP for GTP in EF-1-alpha/GDP, thus allowing the regeneration of EF-1-alpha/GTP that could then be used to form the ternary complex EF-1-alpha/GTP/AAtRNA. The protein is Elongation factor 1-beta of Saccharolobus islandicus (strain Y.N.15.51 / Yellowstone #2) (Sulfolobus islandicus).